Reading from the N-terminus, the 783-residue chain is Cation/H(+) antiporter 2 (783 aa).

The next 12 helical transmembrane spans lie at 19 to 39, 43 to 63, 81 to 101, 121 to 141, 145 to 165, 186 to 206, 208 to 228, 242 to 262, 300 to 320, 323 to 343, 355 to 375, and 391 to 411; these read LNTMFIQMACILVFSQLFYLL, CGQAGPVAQILAGIVLSPVLL, YYSFFSFALRTSFMFLIGLEV, FVVSGLLSFASLMLFIPLFGI, YFTFFLVLLVTLSNTASPVVV, ALFIELTNVVLYTIIMAFISG, IILELFLFLLATVALILINMV, YLSKAETLVFFIFLLIIGITI, EFVLPVYFGYIGFRFSIIALT, FYLGIVIIVIVTIAGKFIGVI, YWLFLPTILSVKGHVGLLLLD, and MMVAALVITTLVSGVLASFLL.

It belongs to the monovalent cation:proton antiporter 2 (CPA2) transporter (TC 2.A.37) family. CHX (TC 2.A.37.4) subfamily. As to expression, specifically expressed in pollen.

It localises to the membrane. In terms of biological role, may operate as a cation/H(+) antiporter. This chain is Cation/H(+) antiporter 2 (CHX2), found in Arabidopsis thaliana (Mouse-ear cress).